We begin with the raw amino-acid sequence, 197 residues long: Imidazoleglycerol-phosphate dehydratase (197 aa).

This sequence belongs to the imidazoleglycerol-phosphate dehydratase family.

The protein localises to the cytoplasm. The catalysed reaction is D-erythro-1-(imidazol-4-yl)glycerol 3-phosphate = 3-(imidazol-4-yl)-2-oxopropyl phosphate + H2O. Its pathway is amino-acid biosynthesis; L-histidine biosynthesis; L-histidine from 5-phospho-alpha-D-ribose 1-diphosphate: step 6/9. The sequence is that of Imidazoleglycerol-phosphate dehydratase from Alkalilimnicola ehrlichii (strain ATCC BAA-1101 / DSM 17681 / MLHE-1).